Here is a 361-residue protein sequence, read N- to C-terminus: 3-dehydroquinate synthase (361 aa).

NAD(+) is bound by residues 105-109, 129-130, lysine 142, lysine 151, and 169-172; these read GVIGD, TT, and FLST. Zn(2+)-binding residues include glutamate 184, histidine 247, and histidine 264.

It belongs to the sugar phosphate cyclases superfamily. Dehydroquinate synthase family. The cofactor is Co(2+). Zn(2+) is required as a cofactor. NAD(+) serves as cofactor.

The protein resides in the cytoplasm. The enzyme catalyses 7-phospho-2-dehydro-3-deoxy-D-arabino-heptonate = 3-dehydroquinate + phosphate. It participates in metabolic intermediate biosynthesis; chorismate biosynthesis; chorismate from D-erythrose 4-phosphate and phosphoenolpyruvate: step 2/7. Functionally, catalyzes the conversion of 3-deoxy-D-arabino-heptulosonate 7-phosphate (DAHP) to dehydroquinate (DHQ). This chain is 3-dehydroquinate synthase, found in Endomicrobium trichonymphae.